Consider the following 59-residue polypeptide: Large ribosomal subunit protein uL30 (59 aa).

Belongs to the universal ribosomal protein uL30 family. Part of the 50S ribosomal subunit.

In Erwinia tasmaniensis (strain DSM 17950 / CFBP 7177 / CIP 109463 / NCPPB 4357 / Et1/99), this protein is Large ribosomal subunit protein uL30.